We begin with the raw amino-acid sequence, 332 residues long: MSFSERLLAAWYQGHPALALLRPLEALYRRVANGRRADFLSGRKPAYRAPLPVLVVGNITVGGTGKTPMILWMIEHCRARGLRVGVISRGYGARPPTTPWRVRAEQDAAEAGDEPLMIVRRSGVPLMIDPDRPRALQALLAEEQLDLVLCDDGLQHYRLARDLELVLIDAARGLGNGRCLPAGPLREPAERLESVDALLYNGADEDPDGGYAFRLQPTALINLQSGERRPLEHFPAGQEVHALAGIGNPQRFFRTLEALHWRAIPHAFPDHATYTAAELAFSPPLPLLMTEKDAVKCRAFAAADWWYLAVDAVPSPAFVAWFDARLEHLLAR.

An ATP-binding site is contributed by 60–67 (TVGGTGKT).

Belongs to the LpxK family.

The catalysed reaction is a lipid A disaccharide + ATP = a lipid IVA + ADP + H(+). It functions in the pathway glycolipid biosynthesis; lipid IV(A) biosynthesis; lipid IV(A) from (3R)-3-hydroxytetradecanoyl-[acyl-carrier-protein] and UDP-N-acetyl-alpha-D-glucosamine: step 6/6. In terms of biological role, transfers the gamma-phosphate of ATP to the 4'-position of a tetraacyldisaccharide 1-phosphate intermediate (termed DS-1-P) to form tetraacyldisaccharide 1,4'-bis-phosphate (lipid IVA). The chain is Tetraacyldisaccharide 4'-kinase from Pseudomonas aeruginosa (strain LESB58).